Consider the following 447-residue polypeptide: Exodeoxyribonuclease 7 large subunit (447 aa).

It belongs to the XseA family. In terms of assembly, heterooligomer composed of large and small subunits.

It localises to the cytoplasm. The enzyme catalyses Exonucleolytic cleavage in either 5'- to 3'- or 3'- to 5'-direction to yield nucleoside 5'-phosphates.. In terms of biological role, bidirectionally degrades single-stranded DNA into large acid-insoluble oligonucleotides, which are then degraded further into small acid-soluble oligonucleotides. The polypeptide is Exodeoxyribonuclease 7 large subunit (Lactobacillus helveticus (strain DPC 4571)).